The following is a 56-amino-acid chain: Ovomucoid (56 aa).

The 51-residue stretch at 6-56 (VDCSEYPKPDCTLEYRPLCGSDNKTYANKCNFCNAVVESNGTLTLSHFGKC) folds into the Kazal-like domain. Intrachain disulfides connect Cys8–Cys38, Cys16–Cys35, and Cys24–Cys56. The N-linked (GlcNAc...) asparagine glycan is linked to Asn45.

It localises to the secreted. This chain is Ovomucoid, found in Callipepla squamata castanogastris (Chestnut bellied scaled quail).